We begin with the raw amino-acid sequence, 403 residues long: Phosphoglycerate kinase (403 aa).

Substrate contacts are provided by residues 21 to 23 (DFN), R36, 59 to 62 (HLGR), R118, and R151. ATP-binding positions include K202, E328, and 354–357 (GGDS).

It belongs to the phosphoglycerate kinase family. As to quaternary structure, monomer.

Its subcellular location is the cytoplasm. The catalysed reaction is (2R)-3-phosphoglycerate + ATP = (2R)-3-phospho-glyceroyl phosphate + ADP. Its pathway is carbohydrate degradation; glycolysis; pyruvate from D-glyceraldehyde 3-phosphate: step 2/5. This is Phosphoglycerate kinase from Akkermansia muciniphila (strain ATCC BAA-835 / DSM 22959 / JCM 33894 / BCRC 81048 / CCUG 64013 / CIP 107961 / Muc).